Consider the following 404-residue polypeptide: S-adenosylmethionine synthase (404 aa).

Position 18 (histidine 18) interacts with ATP. Aspartate 20 is a binding site for Mg(2+). Glutamate 46 contributes to the K(+) binding site. 2 residues coordinate L-methionine: glutamate 59 and glutamine 102. Positions 102-112 (QSPDIAQGVDT) are flexible loop. ATP is bound by residues 177 to 179 (DGK), 249 to 250 (KF), aspartate 258, 264 to 265 (RK), alanine 281, and lysine 285. Residue aspartate 258 coordinates L-methionine. Lysine 289 is an L-methionine binding site.

Belongs to the AdoMet synthase family. Homotetramer; dimer of dimers. The cofactor is Mg(2+). Requires K(+) as cofactor.

The protein localises to the cytoplasm. The enzyme catalyses L-methionine + ATP + H2O = S-adenosyl-L-methionine + phosphate + diphosphate. It participates in amino-acid biosynthesis; S-adenosyl-L-methionine biosynthesis; S-adenosyl-L-methionine from L-methionine: step 1/1. Catalyzes the formation of S-adenosylmethionine (AdoMet) from methionine and ATP. The overall synthetic reaction is composed of two sequential steps, AdoMet formation and the subsequent tripolyphosphate hydrolysis which occurs prior to release of AdoMet from the enzyme. This Nocardia farcinica (strain IFM 10152) protein is S-adenosylmethionine synthase.